The chain runs to 471 residues: Protein translocase subunit SecF (471 aa).

Positions 1–29 (MVSRAKVGAETTKGIDEPDRNDNTDDNGA) are disordered. Basic and acidic residues predominate over residues 13–23 (KGIDEPDRNDN). 6 helical membrane passes run 88 to 108 (GGVI…TFGI), 211 to 231 (ITKK…LYIT), 242 to 262 (ALTT…LVGF), 267 to 287 (ATVI…VIVF), 325 to 345 (LISV…LGVG), and 355 to 375 (LVGI…LLVT). Residues 393–471 (RRTLGSQVGK…TGKRNNVGRR (79 aa)) form a disordered region. Over residues 415 to 431 (KPQNQAESCADASSQEG) the composition is skewed to polar residues. Low complexity predominate over residues 448-460 (PGVRPVRPTGTRR). Positions 461 to 471 (PTGKRNNVGRR) are enriched in basic residues.

This sequence belongs to the SecD/SecF family. SecF subfamily. In terms of assembly, forms a complex with SecD. Part of the essential Sec protein translocation apparatus which comprises SecA, SecYEG and auxiliary proteins SecDF. Other proteins may also be involved.

It is found in the cell membrane. Part of the Sec protein translocase complex. Interacts with the SecYEG preprotein conducting channel. SecDF uses the proton motive force (PMF) to complete protein translocation after the ATP-dependent function of SecA. The polypeptide is Protein translocase subunit SecF (Mycobacterium leprae (strain TN)).